Consider the following 40-residue polypeptide: Antimicrobial peptide 1 (40 aa).

The 40-residue stretch at 1–40 folds into the Chitin-binding type-1 domain; the sequence is AQCGAQGGGATCPGGLCCSQWGWCGSTPKYCGAGCQSNCK. 4 cysteine pairs are disulfide-bonded: Cys3–Cys18, Cys12–Cys24, Cys17–Cys31, and Cys35–Cys39.

In terms of processing, not glycosylated.

In terms of biological role, antimicrobial peptide active against plant pathogenic fungi and Gram-negative and -positive bacteria. This Fagopyrum esculentum (Common buckwheat) protein is Antimicrobial peptide 1.